Consider the following 418-residue polypeptide: Imidazolonepropionase (418 aa).

Histidine 79 and histidine 81 together coordinate Fe(3+). The Zn(2+) site is built by histidine 79 and histidine 81. 4-imidazolone-5-propanoate contacts are provided by arginine 88, tyrosine 151, and histidine 184. Tyrosine 151 is a binding site for N-formimidoyl-L-glutamate. Histidine 249 serves as a coordination point for Fe(3+). Histidine 249 provides a ligand contact to Zn(2+). Glutamine 252 contributes to the 4-imidazolone-5-propanoate binding site. Aspartate 324 lines the Fe(3+) pocket. Aspartate 324 is a binding site for Zn(2+). 2 residues coordinate N-formimidoyl-L-glutamate: asparagine 326 and glycine 328. Position 329 (threonine 329) interacts with 4-imidazolone-5-propanoate.

It belongs to the metallo-dependent hydrolases superfamily. HutI family. It depends on Zn(2+) as a cofactor. The cofactor is Fe(3+).

The protein localises to the cytoplasm. The catalysed reaction is 4-imidazolone-5-propanoate + H2O = N-formimidoyl-L-glutamate. It functions in the pathway amino-acid degradation; L-histidine degradation into L-glutamate; N-formimidoyl-L-glutamate from L-histidine: step 3/3. Catalyzes the hydrolytic cleavage of the carbon-nitrogen bond in imidazolone-5-propanoate to yield N-formimidoyl-L-glutamate. It is the third step in the universal histidine degradation pathway. The protein is Imidazolonepropionase of Colwellia psychrerythraea (strain 34H / ATCC BAA-681) (Vibrio psychroerythus).